Consider the following 465-residue polypeptide: Glycine-rich cell wall structural protein 1.8 (465 aa).

The first 30 residues, 1 to 30 (MATIHRLPSLVFLVLLALGVCSARRALLTL), serve as a signal peptide directing secretion. Tandem repeats lie at residues 205–226 (HGGGGGGGQGGGAGGGYGAGGE), 227–248 (HGGGAGGGQGGGAGGGYGAGGE), 249–270 (HGGGAGGGQGGGAGGGYGAGGE), 271–292 (HGGGAGGGQGGGAGGGYGAGGE), 293–314 (HGGGAGGGQGGGAGGGYGAGGE), 315–336 (HGGGGGGGQGGGAGGGYAAVGE), 337–358 (HGGGYGGGQGGGDGGGYGTGGE), and 359–380 (HGGGYGGGQGGGAGGGYGTGGE). An 8 X 22 AA tandem repeats of H-G-G-G-[GAY]-G-G-G-Q-G-G-G-[AD]-G-G-G-Y-[GA]-[AT]-[GV]-G-E region spans residues 205–380 (HGGGGGGGQG…AGGGYGTGGE (176 aa)).

Expressed in young hypocotyls.

It is found in the secreted. The protein localises to the cell wall. Responsible for plasticity of the cell wall. The sequence is that of Glycine-rich cell wall structural protein 1.8 from Phaseolus vulgaris (Kidney bean).